Here is a 234-residue protein sequence, read N- to C-terminus: tRNA1(Val) (adenine(37)-N6)-methyltransferase (234 aa).

The protein belongs to the methyltransferase superfamily. tRNA (adenine-N(6)-)-methyltransferase family.

The protein localises to the cytoplasm. The catalysed reaction is adenosine(37) in tRNA1(Val) + S-adenosyl-L-methionine = N(6)-methyladenosine(37) in tRNA1(Val) + S-adenosyl-L-homocysteine + H(+). Its function is as follows. Specifically methylates the adenine in position 37 of tRNA(1)(Val) (anticodon cmo5UAC). The polypeptide is tRNA1(Val) (adenine(37)-N6)-methyltransferase (Aliivibrio fischeri (strain MJ11) (Vibrio fischeri)).